The following is a 424-amino-acid chain: Galacturonokinase (424 aa).

S2 carries the N-acetylserine modification. Position 146–155 (146–155) interacts with ATP; the sequence is DSSGLSSSAA. The Proton acceptor role is filled by D197.

The protein belongs to the GHMP kinase family. Mg(2+) serves as cofactor. The cofactor is Mn(2+). Requires Ca(2+) as cofactor. Expressed in roots, stems, leaves, flowers and young siliques. Higher expression in the elongating middle stem region than in the lower or upper stem region.

It catalyses the reaction D-galacturonate + ATP = 1-phospho-alpha-D-galacturonate + ADP + H(+). With respect to regulation, inhibited by EDTA and ADP. In terms of biological role, sugar-1-kinase with a strict substrate specificity for the alpha-anomeric configuration of D-galacturonic acid (D-GalA) and ATP. Involved in the biosynthesis of UDP-galacturonic acid (UDP-GalA) from the salvaged GalA that is released during growth-dependent cell wall restructuring. The sequence is that of Galacturonokinase (GALAK) from Arabidopsis thaliana (Mouse-ear cress).